Reading from the N-terminus, the 196-residue chain is uncharacterized protein (196 aa).

This is an uncharacterized protein from Mycoplasma genitalium (strain ATCC 33530 / DSM 19775 / NCTC 10195 / G37) (Mycoplasmoides genitalium).